Here is a 451-residue protein sequence, read N- to C-terminus: Arginine biosynthesis bifunctional protein ArgJ, mitochondrial (451 aa).

Substrate-binding residues include Thr180, Lys209, Thr220, Glu307, Asn446, and Thr451. Thr220 (nucleophile) is an active-site residue.

This sequence belongs to the ArgJ family. In terms of assembly, heterodimer of an alpha and a beta chain. The alpha and beta chains are autoproteolytically processed from a single precursor protein within the mitochondrion.

It is found in the mitochondrion matrix. The enzyme catalyses N(2)-acetyl-L-ornithine + L-glutamate = N-acetyl-L-glutamate + L-ornithine. The catalysed reaction is L-glutamate + acetyl-CoA = N-acetyl-L-glutamate + CoA + H(+). The protein operates within amino-acid biosynthesis; L-arginine biosynthesis; L-ornithine and N-acetyl-L-glutamate from L-glutamate and N(2)-acetyl-L-ornithine (cyclic): step 1/1. It functions in the pathway amino-acid biosynthesis; L-arginine biosynthesis; N(2)-acetyl-L-ornithine from L-glutamate: step 1/4. Catalyzes two activities which are involved in the cyclic version of arginine biosynthesis: the synthesis of acetylglutamate from glutamate and acetyl-CoA, and of ornithine by transacetylation between acetylornithine and glutamate. This is Arginine biosynthesis bifunctional protein ArgJ, mitochondrial from Fusarium vanettenii (strain ATCC MYA-4622 / CBS 123669 / FGSC 9596 / NRRL 45880 / 77-13-4) (Fusarium solani subsp. pisi).